The chain runs to 534 residues: MSEVSNEAARRRTFAIISHPDAGKTTLTEKLLLFGGAIQMAGSVKGRKAARHATSDWMALEKERGISVTSSVMQFPYEGKIVNLLDTPGHADFGEDTYRVLTAVDSALMVIDVAKGVEERTIKLMEVCRLRDTPIMTFINKLDREGKNPIDLLDEVETVLGIQCAPVTWPIGMGQRLKGVVHLISGEVHLYEQGRNFTRQDSTIFPSLEAPGLVEKIGEQMLAELREELELVQGASNPFDLDAYRAGQQTPVFFGSGVNNFGVQPLLDFFVEHAPPPQARETTGRRVEPTEAKLSGFVFKIQANMDPQHRDRVAFMRVCSGKFTAGMKTLHVRSGKDVKLANALTFMASDREIAAEAWPGDVIGIHNHGTISIGDTFTEGESLSFTGIPNFAPELFRRARLRDPLKLKQLQKGLAQLSEEGATQFFRPLMSNDLILGAVGVLQFDVVAYRLKDEYGVDAIFEPVSVTTARWVHCDNAKKLEEFREKNAGNLGIDAAGQLVYLAPTRVNLQLAQERAPDVRFSATREHAHVKAID.

A tr-type G domain is found at 9–278; that stretch reads ARRRTFAIIS…FFVEHAPPPQ (270 aa). Residues 18 to 25, 86 to 90, and 140 to 143 contribute to the GTP site; these read SHPDAGKT, DTPGH, and NKLD.

Belongs to the TRAFAC class translation factor GTPase superfamily. Classic translation factor GTPase family. PrfC subfamily.

Its subcellular location is the cytoplasm. Increases the formation of ribosomal termination complexes and stimulates activities of RF-1 and RF-2. It binds guanine nucleotides and has strong preference for UGA stop codons. It may interact directly with the ribosome. The stimulation of RF-1 and RF-2 is significantly reduced by GTP and GDP, but not by GMP. The polypeptide is Peptide chain release factor 3 (Xanthomonas euvesicatoria pv. vesicatoria (strain 85-10) (Xanthomonas campestris pv. vesicatoria)).